The following is a 157-amino-acid chain: Probable succinate transporter subunit YjjB (157 aa).

Helical transmembrane passes span 8-28 (FALAQDMILAAIPAVGFAMVF), 50-70 (MILMTSGLNIEWSTFMASMLV), 87-107 (VFTVAAVIPMFPGISAYTAMI), and 129-149 (FLTASSIVGALSIGLSIPGLW).

This sequence belongs to the ThrE exporter (TC 2.A.79) family. As to quaternary structure, the transporter is composed of YjjB and YjjP.

The protein resides in the cell inner membrane. Its function is as follows. Involved in succinate export with YjjP. Both proteins are required for export. The sequence is that of Probable succinate transporter subunit YjjB from Escherichia coli (strain SE11).